The chain runs to 339 residues: UPF0324 membrane protein CPE0129 (339 aa).

The next 8 helical transmembrane spans lie at 12-30, 35-54, 90-112, 122-144, 156-178, 210-232, 259-281, and 316-338; these read ILPG…EFLG, TIGA…NTLF, LGFN…TYFI, YSLL…VSPV, ITIV…SILY, VVEL…VLVF, WFII…GILG, and MLYG…NIFI.

It belongs to the UPF0324 family.

The protein resides in the cell membrane. The protein is UPF0324 membrane protein CPE0129 of Clostridium perfringens (strain 13 / Type A).